The following is a 333-amino-acid chain: Probable G-protein coupled receptor 174 (333 aa).

Topologically, residues 1 to 27 are extracellular; sequence MPANYTCTRPDGDNTDFRYFIYAVTYT. An N-linked (GlcNAc...) asparagine glycan is attached at Asn-4. A helical transmembrane segment spans residues 28 to 48; it reads VILVPGLIGNILALWVFYGYM. Over 49-53 the chain is Cytoplasmic; the sequence is KETKR. The chain crosses the membrane as a helical span at residues 54–74; sequence AVIFMINLAIADLLQVLSLPL. Residues 75-91 are Extracellular-facing; it reads RIFYYLNHDWPFGPGLC. A disulfide bond links Cys-91 and Cys-168. A helical transmembrane segment spans residues 92–112; the sequence is MFCFYLKYVNMYASIYFLVCI. At 113-134 the chain is on the cytoplasmic side; the sequence is SVRRFWFLMYPFRFHDCKQKYD. A helical membrane pass occupies residues 135–155; it reads LYISIAGWLIICLACVLFPLL. Topologically, residues 156 to 182 are extracellular; it reads RTSDDTSGNRTKCFVDLPTRNVNLAQS. N-linked (GlcNAc...) asparagine glycosylation is present at Asn-164. Residues 183–203 form a helical membrane-spanning segment; the sequence is VVMMTIGELIGFVTPLLIVLY. Residues 204–231 are Cytoplasmic-facing; that stretch reads CTWKTVLSLQDKYPMAQDLGEKQKALKM. A helical membrane pass occupies residues 232–252; it reads ILTCAGVFLICFAPYHFSFPL. Residues 253 to 269 are Extracellular-facing; the sequence is DFLVKSNEIKSCLARRV. The chain crosses the membrane as a helical span at residues 270 to 290; it reads ILIFHSVALCLASLNSCLDPV. Topologically, residues 291 to 333 are cytoplasmic; it reads IYYFSTNEFRRRLSRQDLHDSIQLHAKSFVSNHTASTMTPELC.

This sequence belongs to the G-protein coupled receptor 1 family. In terms of assembly, interacts with GNA13. Interacts with CCL21.

The protein localises to the cell membrane. In terms of biological role, G-protein-coupled receptor of lysophosphatidylserine (LysoPS) that plays different roles in immune response. Plays a negative role in regulatory T-cell accumulation and homeostasis. Under inflammatory conditions where LysoPS production increases, contributes to the down-regulation of regulatory T-cell activity to favor effector response. Mediates the suppression of IL-2 production in activated T-lymphocytes leading to inhibition of growth, proliferation and differentiation of T-cells. Mechanistically, acts via G(s)-containing heterotrimeric G proteins to trigger elevated cyclic AMP levels and protein kinase A/PKA activity, which may in turn act to antagonize proximal TCR signaling. Plays an important role in the initial period of sepsis through the regulation of macrophage polarization and pro- and anti-inflammatory cytokine secretions. Upon testosterone treatment, acts as a receptor for CCL21 and subsequently triggers through G(q)-alpha and G(12)/G(13) proteins a calcium flux leading to chemotactic effects on activated B-cells. Signals via GNA13 and PKA to promote CD86 up-regulation by follicular B-cells. This Homo sapiens (Human) protein is Probable G-protein coupled receptor 174 (GPR174).